A 131-amino-acid polypeptide reads, in one-letter code: Small ribosomal subunit protein bS6 (131 aa).

The tract at residues 100-131 is disordered; the sequence is SPMVKAKDERRSRDYSLEDANMDAEEAGDSEE. The span at 104-115 shows a compositional bias: basic and acidic residues; the sequence is KAKDERRSRDYS. A compositionally biased stretch (acidic residues) spans 119–131; it reads ANMDAEEAGDSEE.

It belongs to the bacterial ribosomal protein bS6 family.

Binds together with bS18 to 16S ribosomal RNA. The protein is Small ribosomal subunit protein bS6 of Photorhabdus laumondii subsp. laumondii (strain DSM 15139 / CIP 105565 / TT01) (Photorhabdus luminescens subsp. laumondii).